The chain runs to 47 residues: PhoP/PhoQ regulator MgrB (47 aa).

The chain crosses the membrane as a helical span at residues 6 to 26 (WVALVVVVLACLLLWAQVFNM).

The protein belongs to the MgrB family. May form homooligomers. Probably interacts with the periplasmic domain of PhoQ.

It localises to the cell inner membrane. Its function is as follows. PhoP-regulated transcription is redox-sensitive, being activated when the periplasm becomes more reducing. MgrB acts between DsbA/DsbB and PhoP/PhoQ in this pathway. Represses PhoP/PhoQ signaling, possibly by binding to the periplasmic domain of PhoQ, altering its activity and that of downstream effector PhoP. This chain is PhoP/PhoQ regulator MgrB, found in Escherichia coli O127:H6 (strain E2348/69 / EPEC).